A 308-amino-acid chain; its full sequence is RNA pseudouridylate synthase domain-containing protein 1 (308 aa).

Met1 bears the N-acetylmethionine mark. Asp67 is a catalytic residue. Residues 257-292 form a disordered region; sequence APDPDPSEGGPGPCSPCTPLPGPGRPPPPPETEVQR. Residues 269–287 show a composition bias toward pro residues; it reads PCSPCTPLPGPGRPPPPPE.

The protein belongs to the pseudouridine synthase RluA family.

In Bos taurus (Bovine), this protein is RNA pseudouridylate synthase domain-containing protein 1 (RPUSD1).